Consider the following 361-residue polypeptide: Phospho-N-acetylmuramoyl-pentapeptide-transferase (361 aa).

The next 10 membrane-spanning stretches (helical) occupy residues 28-48, 74-94, 99-119, 133-153, 168-188, 203-223, 236-256, 263-283, 288-308, and 338-358; these read LAII…IKFL, TMGG…LADL, IWIT…DDYA, SKLL…EYLD, LSLD…VGSS, VPIA…GNLI, TGEL…FLWF, VFMG…ISVI, IVLA…ILQV, and KVVI…LSSL.

The protein belongs to the glycosyltransferase 4 family. MraY subfamily. It depends on Mg(2+) as a cofactor.

Its subcellular location is the cell inner membrane. The enzyme catalyses UDP-N-acetyl-alpha-D-muramoyl-L-alanyl-gamma-D-glutamyl-meso-2,6-diaminopimeloyl-D-alanyl-D-alanine + di-trans,octa-cis-undecaprenyl phosphate = di-trans,octa-cis-undecaprenyl diphospho-N-acetyl-alpha-D-muramoyl-L-alanyl-D-glutamyl-meso-2,6-diaminopimeloyl-D-alanyl-D-alanine + UMP. It participates in cell wall biogenesis; peptidoglycan biosynthesis. Its function is as follows. Catalyzes the initial step of the lipid cycle reactions in the biosynthesis of the cell wall peptidoglycan: transfers peptidoglycan precursor phospho-MurNAc-pentapeptide from UDP-MurNAc-pentapeptide onto the lipid carrier undecaprenyl phosphate, yielding undecaprenyl-pyrophosphoryl-MurNAc-pentapeptide, known as lipid I. The chain is Phospho-N-acetylmuramoyl-pentapeptide-transferase from Rickettsia felis (strain ATCC VR-1525 / URRWXCal2) (Rickettsia azadi).